The sequence spans 427 residues: Glutamate-1-semialdehyde 2,1-aminomutase (427 aa).

Lys267 carries the N6-(pyridoxal phosphate)lysine modification.

It belongs to the class-III pyridoxal-phosphate-dependent aminotransferase family. HemL subfamily. As to quaternary structure, homodimer. Pyridoxal 5'-phosphate is required as a cofactor.

Its subcellular location is the cytoplasm. It carries out the reaction (S)-4-amino-5-oxopentanoate = 5-aminolevulinate. It functions in the pathway porphyrin-containing compound metabolism; protoporphyrin-IX biosynthesis; 5-aminolevulinate from L-glutamyl-tRNA(Glu): step 2/2. This is Glutamate-1-semialdehyde 2,1-aminomutase from Syntrophotalea carbinolica (strain DSM 2380 / NBRC 103641 / GraBd1) (Pelobacter carbinolicus).